The primary structure comprises 261 residues: Neurovirulence factor ICP34.5 (261 aa).

The span at methionine 1 to arginine 17 shows a compositional bias: basic residues. The interval methionine 1–glycine 19 is required for nucleolar localization. 3 disordered regions span residues methionine 1–alanine 59, aspartate 75–arginine 135, and arginine 145–glycine 164. Repeats lie at residues arginine 3 to proline 7, arginine 8 to proline 12, proline 16 to valine 23, and proline 24 to valine 31. The 2 X 5 AA tandem repeats of R-R-R-G-P stretch occupies residues arginine 3–proline 12. Residues proline 16 to valine 31 form a 2 X 8 AA tandem repeats of P-R-P-G-A-P-A-V region. Over residues proline 18–proline 32 the composition is skewed to pro residues. Over residues aspartate 75–glutamate 88 the composition is skewed to acidic residues. The segment covering alanine 101 to alanine 111 has biased composition (low complexity). The Nuclear export signal signature appears at leucine 128–arginine 137. Positions arginine 163–histidine 176 are binding to PP1CA. Positions arginine 163–histidine 176 are interaction with host PPP1CA. Residues valine 178 to valine 261 are important for interferon resistance. A Bipartite nuclear localization signal motif is present at residues arginine 188–valine 206. The segment at valine 206–alanine 221 is interaction with host EIF2S1/EIF-2ALPHA. Residues alanine 223 to valine 261 are disordered. Residues alanine 244–valine 261 are compositionally biased toward low complexity.

The protein belongs to the PPP1R15 family. In terms of assembly, interacts with host PPP1CA to form a high-molecular-weight complex that dephosphorylates EIF2S1/eIF-2alpha. Interacts with host EIF2S1/eIF-2alpha; this interaction is crucial for the specific dephosphorylation of EIF2S1/eIF-2alpha by PPP1CA.

The protein resides in the host cytoplasm. It is found in the host nucleus. It localises to the host nucleolus. The protein localises to the virion. In terms of biological role, plays essential roles in viral nuclear egress to mediate capsid transit across the nuclear membrane and also in the inhibition of host immune response and integrated stress response (ISR). Facilitates nuclear egress cooperatively with host C1QBP and protein kinase C/PKC to induce lamin A/C phosphorylation and subsequent reorganization. In turn, lamina disassembles and nuclear egress occurs. Recruits the serine/threonine-protein phosphatase PPP1CA/PP1-alpha to dephosphorylate the translation initiation factor EIF2S1/eIF-2alpha, thereby couteracting the host shutoff of protein synthesis involving double-stranded RNA-dependent protein kinase EIF2AK2/PKR. Also down-modulates the host MHC class II proteins cell surface expression. Acts as a neurovirulence factor that has a profound effect on the growth of the virus in central nervous system tissue, probably through its ability to maintain an environment favorable for viral replication. In Human herpesvirus 2 (strain HG52) (HHV-2), this protein is Neurovirulence factor ICP34.5 (RL1).